Reading from the N-terminus, the 149-residue chain is Small ribosomal subunit protein bS6 (149 aa).

The segment at 94–149 is disordered; the sequence is EKHEEGPSAMMQKRDRDDRPRRDGDRPDRGGFGDRGPRPDRGDRDDRPRRPREDRA.

Belongs to the bacterial ribosomal protein bS6 family.

Its function is as follows. Binds together with bS18 to 16S ribosomal RNA. The protein is Small ribosomal subunit protein bS6 of Sinorhizobium fredii (strain NBRC 101917 / NGR234).